We begin with the raw amino-acid sequence, 261 residues long: Kallikrein 1-related peptidase b21 (261 aa).

Positions 1-17 (MRFLILFLALSLGEIDA) are cleaved as a signal peptide. Positions 18 to 24 (APPVQSR) are cleaved as a propeptide — activation peptide. The 234-residue stretch at 25-258 (IVGGFNCEKN…FTSWIKDTMA (234 aa)) folds into the Peptidase S1 domain. 5 disulfide bridges follow: Cys-31-Cys-173, Cys-50-Cys-66, Cys-152-Cys-219, Cys-184-Cys-198, and Cys-209-Cys-234. The active-site Charge relay system is the His-65. Residue Asn-102 is glycosylated (N-linked (GlcNAc...) asparagine). Asp-120 (charge relay system) is an active-site residue. Ser-213 serves as the catalytic Charge relay system.

It belongs to the peptidase S1 family. Kallikrein subfamily. Expressed in testis and submaxillary gland. In the testis, expression localized specifically to Leydig cells in the interstitial tissues.

It carries out the reaction Preferential cleavage of Arg-|-Xaa bonds in small molecule substrates. Highly selective action to release kallidin (lysyl-bradykinin) from kininogen involves hydrolysis of Met-|-Xaa or Leu-|-Xaa.. Inhibited by protease inhibitors diisopropylfluorophosphate, leupeptin, antipain, benzamidine, phenylmethylsulfonyl fluoride and soybean trypsin inhibitor. Its function is as follows. Glandular kallikreins cleave Met-Lys and Arg-Ser bonds in kininogen to release Lys-bradykinin. Displays trypsin-like substrate specificity and shows activity towards casein, gelatin, fibronectin and IGFBP3. This chain is Kallikrein 1-related peptidase b21 (Klk1b21), found in Mus musculus (Mouse).